Here is a 143-residue protein sequence, read N- to C-terminus: Transcriptional regulator MraZ (143 aa).

SpoVT-AbrB domains lie at 5–47 and 76–119; these read EYEH…TLEE and AVEV…DRET.

This sequence belongs to the MraZ family. As to quaternary structure, forms oligomers.

The protein localises to the cytoplasm. It is found in the nucleoid. This Staphylococcus saprophyticus subsp. saprophyticus (strain ATCC 15305 / DSM 20229 / NCIMB 8711 / NCTC 7292 / S-41) protein is Transcriptional regulator MraZ.